The chain runs to 398 residues: MKILVINCGSSSLKYQLINPETEEVFAKGLCERIGIDGSKLEYEVVAKDFEKKLETPMPSHKEALELVISHLTDKEIGVIASVDEVDAIGHRVVHGGEEFAQSVLINDAVLKAIEANNDLAPLHNPANLMGIRTCMELMPGKKNVAVFDTAFHQTMKPEAFMYPLPYEDYKELKVRKYGFHGTSHLYVSGIMREIMGNPEHSKIIVCHLGNGASITAVKDGKSVDTSMGLTPLQGLMMGTRCGDIDPAAVLFVKNKRGLTDAQMDDRMNKKSGILGLFGKSSDCRDLENAVVEGDERAILAESVSMHRLRSYIGAYAAIMGGVDAICFTGGIGENSSMTREKALEGLEFLGVELDKEINSVRKKGNVKLSKDSSKVLIYKIPTNEELVIARDTFRLAK.

Asn7 serves as a coordination point for Mg(2+). Lys14 contributes to the ATP binding site. Residue Arg92 participates in substrate binding. The Proton donor/acceptor role is filled by Asp149. ATP-binding positions include 208 to 212 (HLGNG), 283 to 285 (DCR), and 331 to 335 (GIGEN). Residue Glu385 participates in Mg(2+) binding.

The protein belongs to the acetokinase family. As to quaternary structure, homodimer. Mg(2+) serves as cofactor. The cofactor is Mn(2+).

It is found in the cytoplasm. The catalysed reaction is acetate + ATP = acetyl phosphate + ADP. It functions in the pathway metabolic intermediate biosynthesis; acetyl-CoA biosynthesis; acetyl-CoA from acetate: step 1/2. Functionally, catalyzes the formation of acetyl phosphate from acetate and ATP. Can also catalyze the reverse reaction. The polypeptide is Acetate kinase (Fusobacterium nucleatum subsp. nucleatum (strain ATCC 25586 / DSM 15643 / BCRC 10681 / CIP 101130 / JCM 8532 / KCTC 2640 / LMG 13131 / VPI 4355)).